The following is a 234-amino-acid chain: Sugar fermentation stimulation protein homolog (234 aa).

This sequence belongs to the SfsA family.

This chain is Sugar fermentation stimulation protein homolog, found in Edwardsiella ictaluri (strain 93-146).